Reading from the N-terminus, the 410-residue chain is Phospho-N-acetylmuramoyl-pentapeptide-transferase (410 aa).

The next 10 helical transmembrane spans lie at 27-47 (RMILAAITSLLLSIFLGPYFI), 77-97 (TPTMGGILILSSMLVSLVLWM), 99-119 (LTHIFTLILFVTTVFLGLIGG), 140-160 (LFFQFVLSAAIASYFLLSSVN), 213-233 (PVVTFGGISLILMAFFIFFVI), 248-268 (GLLAGCLVTAAGSLCLIAFVS), 288-308 (IAIYLCALIGASLGFLWYNGY), 312-332 (VFMGDTGSLTLGGILGVSAVL), 337-357 (FLLGIVGGIFVAEALSVILQV), and 389-409 (VIRFWIMSLLFAIIGIASLKF).

The protein belongs to the glycosyltransferase 4 family. MraY subfamily. Mg(2+) is required as a cofactor.

Its subcellular location is the cell inner membrane. The catalysed reaction is UDP-N-acetyl-alpha-D-muramoyl-L-alanyl-gamma-D-glutamyl-meso-2,6-diaminopimeloyl-D-alanyl-D-alanine + di-trans,octa-cis-undecaprenyl phosphate = di-trans,octa-cis-undecaprenyl diphospho-N-acetyl-alpha-D-muramoyl-L-alanyl-D-glutamyl-meso-2,6-diaminopimeloyl-D-alanyl-D-alanine + UMP. It participates in cell wall biogenesis; peptidoglycan biosynthesis. Catalyzes the initial step of the lipid cycle reactions in the biosynthesis of the cell wall peptidoglycan: transfers peptidoglycan precursor phospho-MurNAc-pentapeptide from UDP-MurNAc-pentapeptide onto the lipid carrier undecaprenyl phosphate, yielding undecaprenyl-pyrophosphoryl-MurNAc-pentapeptide, known as lipid I. This is Phospho-N-acetylmuramoyl-pentapeptide-transferase from Protochlamydia amoebophila (strain UWE25).